A 152-amino-acid polypeptide reads, in one-letter code: Putative polyketide cyclase (152 aa).

The protein to polyketide cyclases.

The protein operates within antibiotic biosynthesis; curamycin biosynthesis. The protein is Putative polyketide cyclase (curF) of Streptomyces cyaneus (Streptomyces curacoi).